The following is a 624-amino-acid chain: tRNA uridine 5-carboxymethylaminomethyl modification enzyme MnmG (624 aa).

Residues 16 to 21 (GAGHAG), Val-128, and Ser-183 each bind FAD. 275-289 (GPRYCPSIEDKVVRF) is an NAD(+) binding site. Gln-372 is an FAD binding site.

It belongs to the MnmG family. Homodimer. Heterotetramer of two MnmE and two MnmG subunits. FAD serves as cofactor.

The protein localises to the cytoplasm. Functionally, NAD-binding protein involved in the addition of a carboxymethylaminomethyl (cmnm) group at the wobble position (U34) of certain tRNAs, forming tRNA-cmnm(5)s(2)U34. The protein is tRNA uridine 5-carboxymethylaminomethyl modification enzyme MnmG of Geobacter metallireducens (strain ATCC 53774 / DSM 7210 / GS-15).